We begin with the raw amino-acid sequence, 31 residues long: Cytochrome b6-f complex subunit 6 (31 aa).

A helical transmembrane segment spans residues 4-26; it reads ITSYFGFLLAALTITSALLIGLN.

The protein belongs to the PetL family. As to quaternary structure, the 4 large subunits of the cytochrome b6-f complex are cytochrome b6, subunit IV (17 kDa polypeptide, PetD), cytochrome f and the Rieske protein, while the 4 small subunits are PetG, PetL, PetM and PetN. The complex functions as a dimer.

The protein resides in the plastid. It localises to the chloroplast thylakoid membrane. Functionally, component of the cytochrome b6-f complex, which mediates electron transfer between photosystem II (PSII) and photosystem I (PSI), cyclic electron flow around PSI, and state transitions. PetL is important for photoautotrophic growth as well as for electron transfer efficiency and stability of the cytochrome b6-f complex. This is Cytochrome b6-f complex subunit 6 from Amborella trichopoda.